Here is a 321-residue protein sequence, read N- to C-terminus: Solute carrier family 25 member 33 (321 aa).

3 Solcar repeats span residues 9 to 118, 126 to 213, and 231 to 315; these read ENTL…AKEQ, NSNI…LKKY, and TSFF…IVYL. A run of 6 helical transmembrane segments spans residues 12 to 32, 49 to 65, 121 to 141, 190 to 210, 233 to 253, and 298 to 318; these read LLHL…TCPL, VYYP…AGMV, GIFV…AAFI, LTAS…YESL, FFGL…IAYP, and QIPN…LLED.

Belongs to the mitochondrial carrier (TC 2.A.29) family. As to expression, expressed in the central nervous system. Also expressed in testis and skeletal muscle. Weakly expressed in heart, liver, kidney, prostate, colon and peripheral blood leukocytes.

The protein localises to the mitochondrion inner membrane. It carries out the reaction UTP(in) + UDP(out) = UTP(out) + UDP(in). It catalyses the reaction dUTP(out) + UTP(in) = dUTP(in) + UTP(out). The enzyme catalyses 5-methyl-UTP(out) + UTP(in) = 5-methyl-UTP(in) + UTP(out). The catalysed reaction is 5-methyl-UDP(out) + UTP(in) = 5-methyl-UDP(in) + UTP(out). It carries out the reaction UTP(in) + CTP(out) = UTP(out) + CTP(in). It catalyses the reaction CDP(out) + UTP(in) = CDP(in) + UTP(out). The enzyme catalyses dCTP(out) + UTP(in) = dCTP(in) + UTP(out). The catalysed reaction is dCDP(out) + UTP(in) = dCDP(in) + UTP(out). It carries out the reaction UTP(in) + GTP(out) = UTP(out) + GTP(in). It catalyses the reaction UTP(in) + GDP(out) = UTP(out) + GDP(in). The enzyme catalyses dGTP(out) + UTP(in) = dGTP(in) + UTP(out). The catalysed reaction is dGDP(out) + UTP(in) = dGDP(in) + UTP(out). It carries out the reaction ITP(out) + UTP(in) = ITP(in) + UTP(out). Its activity is regulated as follows. Inhibited by pyridoxal 5'-phosphate, 4,7-diphenyl-1,10-phenanthroline, tannic acid, and mercurials (mercury dichloride, mersalyl acid, p-hydroxymercuribenzoate). Functionally, mitochondrial transporter that imports/exports pyrimidine nucleotides into and from mitochondria. Selectively transports uridine, thymidine, guanosine, cytosine and inosine (deoxy)nucleoside di- and triphosphates by an antiport mechanism. May import (deoxy)nucleoside triphosphates in exchange for intramitochondrial (deoxy)nucleoside diphosphates, thus providing precursors necessary for de novo synthesis of mitochondrial DNA and RNA while exporting products of their catabolism. Participates in mitochondrial genome maintenance, regulation of mitochondrial membrane potential and mitochondrial respiration. Upon INS or IGF1 stimulation regulates cell growth and proliferation by controlling mitochondrial DNA replication and transcription, the ratio of mitochondria-to nuclear-encoded components of the electron transport chain resulting in control of mitochondrial ROS production. Participates in dendritic cell endocytosis and may associate with mitochondrial oxidative phosphorylation. The polypeptide is Solute carrier family 25 member 33 (SLC25A33) (Homo sapiens (Human)).